A 216-amino-acid chain; its full sequence is Thiamine-phosphate synthase (216 aa).

Residues 40–44 (QLRIK) and Asn72 each bind 4-amino-2-methyl-5-(diphosphooxymethyl)pyrimidine. Residues Asp73 and Asp92 each coordinate Mg(2+). Position 111 (Ser111) interacts with 4-amino-2-methyl-5-(diphosphooxymethyl)pyrimidine. 137–139 (TTT) is a binding site for 2-[(2R,5Z)-2-carboxy-4-methylthiazol-5(2H)-ylidene]ethyl phosphate. Lys140 serves as a coordination point for 4-amino-2-methyl-5-(diphosphooxymethyl)pyrimidine. 2-[(2R,5Z)-2-carboxy-4-methylthiazol-5(2H)-ylidene]ethyl phosphate-binding positions include Gly169 and 189–190 (VS).

The protein belongs to the thiamine-phosphate synthase family. Requires Mg(2+) as cofactor.

The enzyme catalyses 2-[(2R,5Z)-2-carboxy-4-methylthiazol-5(2H)-ylidene]ethyl phosphate + 4-amino-2-methyl-5-(diphosphooxymethyl)pyrimidine + 2 H(+) = thiamine phosphate + CO2 + diphosphate. It catalyses the reaction 2-(2-carboxy-4-methylthiazol-5-yl)ethyl phosphate + 4-amino-2-methyl-5-(diphosphooxymethyl)pyrimidine + 2 H(+) = thiamine phosphate + CO2 + diphosphate. The catalysed reaction is 4-methyl-5-(2-phosphooxyethyl)-thiazole + 4-amino-2-methyl-5-(diphosphooxymethyl)pyrimidine + H(+) = thiamine phosphate + diphosphate. The protein operates within cofactor biosynthesis; thiamine diphosphate biosynthesis; thiamine phosphate from 4-amino-2-methyl-5-diphosphomethylpyrimidine and 4-methyl-5-(2-phosphoethyl)-thiazole: step 1/1. Functionally, condenses 4-methyl-5-(beta-hydroxyethyl)thiazole monophosphate (THZ-P) and 2-methyl-4-amino-5-hydroxymethyl pyrimidine pyrophosphate (HMP-PP) to form thiamine monophosphate (TMP). This is Thiamine-phosphate synthase from Photorhabdus laumondii subsp. laumondii (strain DSM 15139 / CIP 105565 / TT01) (Photorhabdus luminescens subsp. laumondii).